The following is a 336-amino-acid chain: Ribosomal RNA large subunit methyltransferase F (336 aa).

Belongs to the methyltransferase superfamily. METTL16/RlmF family.

The protein localises to the cytoplasm. It carries out the reaction adenosine(1618) in 23S rRNA + S-adenosyl-L-methionine = N(6)-methyladenosine(1618) in 23S rRNA + S-adenosyl-L-homocysteine + H(+). Functionally, specifically methylates the adenine in position 1618 of 23S rRNA. This Yersinia pestis bv. Antiqua (strain Angola) protein is Ribosomal RNA large subunit methyltransferase F.